We begin with the raw amino-acid sequence, 777 residues long: Zygote defective protein 12 (777 aa).

Composition is skewed to basic and acidic residues over residues 1 to 10 (MLDLTNKESE) and 18 to 36 (KYEDSIDGREVGTSKPFKE). The segment at 1–36 (MLDLTNKESESSDNGNSKYEDSIDGREVGTSKPFKE) is disordered. The interval 1–234 (MLDLTNKESE…ESSGKLNGNG (234 aa)) is interaction with dli-1. The region spanning 44 to 169 (QADLADMAVW…VTLAHIGKNA (126 aa)) is the Calponin-homology (CH) domain. Disordered stretches follow at residues 217-242 (QSELNSLSESSGKLNGNGSSERRSNA) and 273-292 (SFETAQHDMSSNSESGDISI). Low complexity predominate over residues 218 to 235 (SELNSLSESSGKLNGNGS). Coiled coils occupy residues 236-399 (SERR…HHVK) and 425-688 (NTEL…QENR). The span at 273–288 (SFETAQHDMSSNSESG) shows a compositional bias: polar residues. Residues 747–767 (AMASILVLGFLVFIAWMFINI) traverse the membrane as a helical segment. The segment at 749–777 (ASILVLGFLVFIAWMFININSALNAPPNA) is interaction with unc-84.

The protein belongs to the hook family. As to quaternary structure, homodimer. Interacts with the dynein subunit dli-1 via its N-terminus. May interact with microtubules. Interacts with sut-2. Interacts (via C-terminus) with unc-84 (via C-terminus); the interaction is direct. In terms of tissue distribution, expressed in the syncytial gonad, oocytes, and in all cells during the development of the early embryo.

Its subcellular location is the nucleus membrane. It localises to the cytoplasm. It is found in the cytoskeleton. The protein localises to the microtubule organizing center. The protein resides in the centrosome. In terms of biological role, cytoskeletal linker protein, which is essential for attachment of the centrosome to the nucleus. Required for dynein localization to the nuclear envelope. Forms a LINC (LInker of Nucleoskeleton and Cytoskeleton) complex together with unc-84, that may be involved in DNA damage repair. In Caenorhabditis elegans, this protein is Zygote defective protein 12.